The following is a 362-amino-acid chain: MYKTIREKTKAVYVGNVQIGGNNKVVIQSMTTTKTHDVEKTVAQVKELVREGCELVRIAVLDDEDAAAFGEVVKNSPCPIIADIHFNPLYAIKAIESGAAKVRLNPGNIKDEEQLRKIIDLANKKNIPIRVGVNSGSLPMDLMKSHGVTADAMMIAVKRYINLFESNGFNNIVVSLKATNVLLAIEAYKKAAMEFNYPLHIGITEAGSLFNGTIKSAAGLGVLLHEGIGNTIRISLTGDPLSEVKVCKKLLNSLGLYDNLVDIISCPTCGRLNFDLNPVVKEIEKFTRKMNFPLKVAILGCAVNGPGEAKEADIGIAGGNGTGIIFANGKAIKSVPEDQLVDELKKLISIKYKEYLDSKKDK.

[4Fe-4S] cluster-binding residues include Cys-266, Cys-269, Cys-301, and Glu-308.

Belongs to the IspG family. It depends on [4Fe-4S] cluster as a cofactor.

The catalysed reaction is (2E)-4-hydroxy-3-methylbut-2-enyl diphosphate + oxidized [flavodoxin] + H2O + 2 H(+) = 2-C-methyl-D-erythritol 2,4-cyclic diphosphate + reduced [flavodoxin]. Its pathway is isoprenoid biosynthesis; isopentenyl diphosphate biosynthesis via DXP pathway; isopentenyl diphosphate from 1-deoxy-D-xylulose 5-phosphate: step 5/6. Its function is as follows. Converts 2C-methyl-D-erythritol 2,4-cyclodiphosphate (ME-2,4cPP) into 1-hydroxy-2-methyl-2-(E)-butenyl 4-diphosphate. This is 4-hydroxy-3-methylbut-2-en-1-yl diphosphate synthase (flavodoxin) from Malacoplasma penetrans (strain HF-2) (Mycoplasma penetrans).